The sequence spans 311 residues: Methionyl-tRNA formyltransferase (311 aa).

A (6S)-5,6,7,8-tetrahydrofolate-binding site is contributed by S110–P113.

This sequence belongs to the Fmt family.

The enzyme catalyses L-methionyl-tRNA(fMet) + (6R)-10-formyltetrahydrofolate = N-formyl-L-methionyl-tRNA(fMet) + (6S)-5,6,7,8-tetrahydrofolate + H(+). Its function is as follows. Attaches a formyl group to the free amino group of methionyl-tRNA(fMet). The formyl group appears to play a dual role in the initiator identity of N-formylmethionyl-tRNA by promoting its recognition by IF2 and preventing the misappropriation of this tRNA by the elongation apparatus. The sequence is that of Methionyl-tRNA formyltransferase from Acidobacterium capsulatum (strain ATCC 51196 / DSM 11244 / BCRC 80197 / JCM 7670 / NBRC 15755 / NCIMB 13165 / 161).